Consider the following 478-residue polypeptide: MNILFAVSECVPFIKSGGLADVAGALPKELKKLGVNVRIMLPNYSLIPANLRESFKLHKVIHVPLGWRNQYCGILKGEQDGITYYLIDNEYYFKRDSLYGHYDDGERFSFFSKAILESIPYLDFEVDLIHSHDWHTAMVNFLLHEKYKDNPLYEKIKTVYTIHNLQFQGVFPREVIHDLLELGDEYFNSEQLEFYGNINFMKGGIIAADHITTVSSTYKEEIQYEFFGEKLDGLLRKYNDKLSGIVNGIDTSVYNPRLDSYITATYDVDTLYAKRENKWALQHYFGLPEKENTPIISMVTRLTKQKGLDLVRAVFQEIMQEDVQCIILGSGDSEYEQFFEWMAYEYSEKVKVYIGFNEELAHQVYAGSDLFLMPSLFEPCGLGQLIALTYGVIPIVRETGGLNDTVKSYHVETKSGNGFTFTNFNAHDMLYTVRRALRYYEDPAVWNQLVKQAMTEDHSWKTSALAYKDLYNRLLKLS.

K15 contacts ADP-alpha-D-glucose.

Belongs to the glycosyltransferase 1 family. Bacterial/plant glycogen synthase subfamily.

The enzyme catalyses [(1-&gt;4)-alpha-D-glucosyl](n) + ADP-alpha-D-glucose = [(1-&gt;4)-alpha-D-glucosyl](n+1) + ADP + H(+). Its pathway is glycan biosynthesis; glycogen biosynthesis. Functionally, synthesizes alpha-1,4-glucan chains using ADP-glucose. The protein is Glycogen synthase of Bacillus cytotoxicus (strain DSM 22905 / CIP 110041 / 391-98 / NVH 391-98).